A 501-amino-acid polypeptide reads, in one-letter code: Glycerol kinase (501 aa).

Residue Thr-17 participates in ADP binding. ATP is bound by residues Thr-17, Thr-18, and Ser-19. Thr-17 contacts sn-glycerol 3-phosphate. Arg-21 is a binding site for ADP. Sn-glycerol 3-phosphate contacts are provided by Arg-87, Glu-88, Tyr-139, and Asp-243. Arg-87, Glu-88, Tyr-139, Asp-243, and Gln-244 together coordinate glycerol. ADP is bound by residues Thr-265 and Gly-308. The ATP site is built by Thr-265, Gly-308, Gln-312, and Gly-409. Gly-409 and Asn-413 together coordinate ADP.

It belongs to the FGGY kinase family.

It carries out the reaction glycerol + ATP = sn-glycerol 3-phosphate + ADP + H(+). It functions in the pathway polyol metabolism; glycerol degradation via glycerol kinase pathway; sn-glycerol 3-phosphate from glycerol: step 1/1. Inhibited by fructose 1,6-bisphosphate (FBP). Functionally, key enzyme in the regulation of glycerol uptake and metabolism. Catalyzes the phosphorylation of glycerol to yield sn-glycerol 3-phosphate. In Pseudomonas syringae pv. tomato (strain ATCC BAA-871 / DC3000), this protein is Glycerol kinase.